We begin with the raw amino-acid sequence, 288 residues long: Light-independent protochlorophyllide reductase iron-sulfur ATP-binding protein (288 aa).

Residues 10 to 15 and K39 each bind ATP; that span reads GIGKST. S14 lines the Mg(2+) pocket. Residues C95 and C129 each contribute to the [4Fe-4S] cluster site. Residues 180–181 and 204–206 each bind ATP; these read NR and PLL.

The protein belongs to the NifH/BchL/ChlL family. As to quaternary structure, homodimer. Protochlorophyllide reductase is composed of three subunits; ChlL, ChlN and ChlB. The cofactor is [4Fe-4S] cluster.

The protein localises to the plastid. It is found in the chloroplast. The enzyme catalyses chlorophyllide a + oxidized 2[4Fe-4S]-[ferredoxin] + 2 ADP + 2 phosphate = protochlorophyllide a + reduced 2[4Fe-4S]-[ferredoxin] + 2 ATP + 2 H2O. It functions in the pathway porphyrin-containing compound metabolism; chlorophyll biosynthesis (light-independent). Functionally, component of the dark-operative protochlorophyllide reductase (DPOR) that uses Mg-ATP and reduced ferredoxin to reduce ring D of protochlorophyllide (Pchlide) to form chlorophyllide a (Chlide). This reaction is light-independent. The L component serves as a unique electron donor to the NB-component of the complex, and binds Mg-ATP. The polypeptide is Light-independent protochlorophyllide reductase iron-sulfur ATP-binding protein (Stigeoclonium helveticum (Green alga)).